A 134-amino-acid chain; its full sequence is Small ribosomal subunit protein bS16 (134 aa).

A disordered region spans residues 81 to 134 (LAKRPARSNPKKAEPGKKAQERLAAARQAEEEAKAAAEAAAAAPAEAPAEEAAS). A compositionally biased stretch (basic and acidic residues) spans 91–101 (KKAEPGKKAQE). The segment covering 116-134 (AAEAAAAAPAEAPAEEAAS) has biased composition (low complexity).

Belongs to the bacterial ribosomal protein bS16 family.

The sequence is that of Small ribosomal subunit protein bS16 from Chelativorans sp. (strain BNC1).